Here is a 798-residue protein sequence, read N- to C-terminus: Phenylalanine--tRNA ligase beta subunit (798 aa).

A tRNA-binding domain is found at I38–E148. Residues F400 to D475 enclose the B5 domain. Mg(2+) contacts are provided by D453, D459, E462, and E463. In terms of domain architecture, FDX-ACB spans S703–R796.

It belongs to the phenylalanyl-tRNA synthetase beta subunit family. Type 1 subfamily. As to quaternary structure, tetramer of two alpha and two beta subunits. The cofactor is Mg(2+).

It is found in the cytoplasm. The catalysed reaction is tRNA(Phe) + L-phenylalanine + ATP = L-phenylalanyl-tRNA(Phe) + AMP + diphosphate + H(+). The polypeptide is Phenylalanine--tRNA ligase beta subunit (Carboxydothermus hydrogenoformans (strain ATCC BAA-161 / DSM 6008 / Z-2901)).